The primary structure comprises 35 residues: Non-specific lipid-transfer protein 1 (35 aa).

Cys13 and Cys28 are oxidised to a cystine.

In terms of tissue distribution, seeds.

Functionally, plant non-specific lipid-transfer proteins transfer phospholipids as well as galactolipids across membranes. May play a role in wax or cutin deposition in the cell walls of expanding epidermal cells and certain secretory tissues. Inhibits the growth of F.oxysporum and P.infestans. The chain is Non-specific lipid-transfer protein 1 from Nigella sativa (Black cumin).